The chain runs to 296 residues: MMIKQYLQVTKPGIIFGNLISVVGGFLLASKGVIDYPLFLATLFGVSLVVASGCVFNNYIDRDIDRIMERTKNRVLVKGLIDPKVSLIYASILGIAGMLLLYVGANPLAMWLAVIGFVIYVGVYSLYMKRKSVYGTLIGSLSGAAPPVIGYCAVTGQFDMGALILLLIFSLWQMPHSYAIAIFRFKDYQAANIPVLPVIKGISVTKNHITLYILAFMVATLMLTLSGYAGYKYLVVAAAVSVWWLGMALRGYKATNDSVWARKLFVFSIIAITSLSVMMSVDFNVPSSAGLLTYVG.

9 helical membrane-spanning segments follow: residues 14-34 (IIFG…KGVI), 36-56 (YPLF…GCVF), 75-95 (VLVK…ILGI), 99-119 (LLLY…GFVI), 133-153 (VYGT…GYCA), 163-183 (LILL…IAIF), 209-229 (ITLY…SGYA), 234-254 (LVVA…GYKA), and 265-285 (FVFS…DFNV).

The protein belongs to the UbiA prenyltransferase family. Protoheme IX farnesyltransferase subfamily.

The protein localises to the cell inner membrane. The enzyme catalyses heme b + (2E,6E)-farnesyl diphosphate + H2O = Fe(II)-heme o + diphosphate. Its pathway is porphyrin-containing compound metabolism; heme O biosynthesis; heme O from protoheme: step 1/1. Converts heme B (protoheme IX) to heme O by substitution of the vinyl group on carbon 2 of heme B porphyrin ring with a hydroxyethyl farnesyl side group. This is Protoheme IX farnesyltransferase from Yersinia enterocolitica serotype O:8 / biotype 1B (strain NCTC 13174 / 8081).